A 354-amino-acid chain; its full sequence is Membrane progestin receptor beta (354 aa).

Topologically, residues Met-1–Val-76 are cytoplasmic. A helical transmembrane segment spans residues Val-77–Val-97. The Extracellular portion of the chain corresponds to Glu-98 to Pro-111. A helical membrane pass occupies residues Leu-112–Leu-132. Over Gln-133–Glu-173 the chain is Cytoplasmic. A helical transmembrane segment spans residues Leu-174–Cys-194. At Cys-195–Gln-213 the chain is on the extracellular side. The helical transmembrane segment at Val-214 to Leu-234 threads the bilayer. Topologically, residues Cys-235 to Gln-243 are cytoplasmic. The helical transmembrane segment at Ala-244–Cys-264 threads the bilayer. At Pro-265–Gln-283 the chain is on the extracellular side. The helical transmembrane segment at Ile-284–Tyr-304 threads the bilayer. At Gln-305–His-315 the chain is on the cytoplasmic side. Residues Gly-316 to Ala-336 traverse the membrane as a helical segment. The Extracellular portion of the chain corresponds to Thr-337 to Ser-354.

The protein belongs to the ADIPOR family. In terms of tissue distribution, expressed in brain and testis.

The protein localises to the cell membrane. Plasma membrane progesterone (P4) receptor coupled to G proteins. Seems to act through a G(i) mediated pathway. May be involved in oocyte maturation. Also binds dehydroepiandrosterone (DHEA), pregnanolone, pregnenolone and allopregnanolone. In Mus musculus (Mouse), this protein is Membrane progestin receptor beta.